The following is a 339-amino-acid chain: Methylthioribose-1-phosphate isomerase (339 aa).

Residues 49-51 (RGA), R86, and Q187 contribute to the substrate site. Residue D228 is the Proton donor of the active site. 238-239 (NK) serves as a coordination point for substrate.

This sequence belongs to the eIF-2B alpha/beta/delta subunits family. MtnA subfamily.

It catalyses the reaction 5-(methylsulfanyl)-alpha-D-ribose 1-phosphate = 5-(methylsulfanyl)-D-ribulose 1-phosphate. It participates in amino-acid biosynthesis; L-methionine biosynthesis via salvage pathway; L-methionine from S-methyl-5-thio-alpha-D-ribose 1-phosphate: step 1/6. Functionally, catalyzes the interconversion of methylthioribose-1-phosphate (MTR-1-P) into methylthioribulose-1-phosphate (MTRu-1-P). The protein is Methylthioribose-1-phosphate isomerase of Cronobacter sakazakii (strain ATCC BAA-894) (Enterobacter sakazakii).